The sequence spans 530 residues: Ubiquitin carboxyl-terminal hydrolase 17-like protein 19 (530 aa).

In terms of domain architecture, USP spans 80-375 (AGLQNMGNTC…QAYVLFYIQK (296 aa)). Cys-89 (nucleophile) is an active-site residue. Catalysis depends on His-334, which acts as the Proton acceptor. Basic and acidic residues-rich tracts occupy residues 382 to 392 (SESVSRGREPR) and 398 to 413 (DTDRRATQGELKRDHP). Disordered stretches follow at residues 382–413 (SESVSRGREPRALGAEDTDRRATQGELKRDHP) and 476–530 (KNHH…LVCQ). Over residues 484–495 (SSLLKLSSTTPT) the composition is skewed to low complexity. Over residues 496–505 (HQESMNTGTL) the composition is skewed to polar residues. Over residues 510-524 (GRARRSKGKNKHSKR) the composition is skewed to basic residues.

It belongs to the peptidase C19 family. USP17 subfamily.

The protein resides in the nucleus. It is found in the endoplasmic reticulum. The enzyme catalyses Thiol-dependent hydrolysis of ester, thioester, amide, peptide and isopeptide bonds formed by the C-terminal Gly of ubiquitin (a 76-residue protein attached to proteins as an intracellular targeting signal).. Its function is as follows. Deubiquitinating enzyme that removes conjugated ubiquitin from specific proteins to regulate different cellular processes that may include cell proliferation, progression through the cell cycle, apoptosis, cell migration, and the cellular response to viral infection. The protein is Ubiquitin carboxyl-terminal hydrolase 17-like protein 19 (USP17L19) of Homo sapiens (Human).